The following is a 70-amino-acid chain: Putative membrane protein insertion efficiency factor (70 aa).

This sequence belongs to the UPF0161 family.

It is found in the cell membrane. Could be involved in insertion of integral membrane proteins into the membrane. The polypeptide is Putative membrane protein insertion efficiency factor (Rubrobacter xylanophilus (strain DSM 9941 / JCM 11954 / NBRC 16129 / PRD-1)).